A 152-amino-acid chain; its full sequence is Nucleoside diphosphate kinase (152 aa).

Positions 11, 59, 87, 93, 104, and 114 each coordinate ATP. H117 functions as the Pros-phosphohistidine intermediate in the catalytic mechanism.

The protein belongs to the NDK family. Homotetramer. Mg(2+) serves as cofactor.

The protein localises to the cytoplasm. The enzyme catalyses a 2'-deoxyribonucleoside 5'-diphosphate + ATP = a 2'-deoxyribonucleoside 5'-triphosphate + ADP. The catalysed reaction is a ribonucleoside 5'-diphosphate + ATP = a ribonucleoside 5'-triphosphate + ADP. Major role in the synthesis of nucleoside triphosphates other than ATP. The ATP gamma phosphate is transferred to the NDP beta phosphate via a ping-pong mechanism, using a phosphorylated active-site intermediate. This Prochlorococcus marinus (strain MIT 9515) protein is Nucleoside diphosphate kinase.